Consider the following 395-residue polypeptide: Flap endonuclease 1 (395 aa).

Positions M1–K104 are N-domain. Residue D34 participates in Mg(2+) binding. DNA-binding residues include R47 and R70. Residue D86 participates in Mg(2+) binding. Residues R103–V123 are disordered. Residues D122 to H253 are I-domain. Mg(2+) contacts are provided by E158, E160, D179, and D181. Residue E158 coordinates DNA. 2 residues coordinate DNA: G231 and D233. D233 serves as a coordination point for Mg(2+). An interaction with PCNA region spans residues Q341–F349. The segment covering D356–S389 has biased composition (basic and acidic residues). The disordered stretch occupies residues D356–A395.

Belongs to the XPG/RAD2 endonuclease family. FEN1 subfamily. Interacts with PCNA. Three molecules of FEN1 bind to one PCNA trimer with each molecule binding to one PCNA monomer. PCNA stimulates the nuclease activity without altering cleavage specificity. Requires Mg(2+) as cofactor. Phosphorylated. Phosphorylation upon DNA damage induces relocalization to the nuclear plasma.

It is found in the nucleus. The protein localises to the nucleolus. The protein resides in the nucleoplasm. Its subcellular location is the mitochondrion. Its function is as follows. Structure-specific nuclease with 5'-flap endonuclease and 5'-3' exonuclease activities involved in DNA replication and repair. During DNA replication, cleaves the 5'-overhanging flap structure that is generated by displacement synthesis when DNA polymerase encounters the 5'-end of a downstream Okazaki fragment. It enters the flap from the 5'-end and then tracks to cleave the flap base, leaving a nick for ligation. Also involved in the long patch base excision repair (LP-BER) pathway, by cleaving within the apurinic/apyrimidinic (AP) site-terminated flap. Acts as a genome stabilization factor that prevents flaps from equilibrating into structures that lead to duplications and deletions. Also possesses 5'-3' exonuclease activity on nicked or gapped double-stranded DNA, and exhibits RNase H activity. Also involved in replication and repair of rDNA and in repairing mitochondrial DNA. The chain is Flap endonuclease 1 from Uncinocarpus reesii (strain UAMH 1704).